A 152-amino-acid chain; its full sequence is SKP1-like protein 12 (152 aa).

The interval 94-152 (ILAANYLNIKSLFDLTCQTVADMIKGKTPEEIRSTFNIENDFTPEEEEAVRKENQWAFE) is interaction with the F-box domain of F-box proteins.

It belongs to the SKP1 family. As to quaternary structure, part of a SCF (SKP1-cullin-F-box) protein ligase complex. Interacts with ADO3/FKF1, COI1/FBL2, EBF1/FBL6, PP2B10, At3g61590 and At5g49610. In terms of tissue distribution, expressed in young seedlings, roots, leaves, floral stems, inflorescences, and siliques, with a slightly higher level in inflorescence than in other tissues.

Its subcellular location is the nucleus. The protein operates within protein modification; protein ubiquitination. Its function is as follows. Involved in ubiquitination and subsequent proteasomal degradation of target proteins. Together with CUL1, RBX1 and a F-box protein, it forms a SCF E3 ubiquitin ligase complex. The functional specificity of this complex depends on the type of F-box protein. In the SCF complex, it serves as an adapter that links the F-box protein to CUL1. Plays a role during early flowers reproductive development. The polypeptide is SKP1-like protein 12 (ASK12) (Arabidopsis thaliana (Mouse-ear cress)).